Here is a 2527-residue protein sequence, read N- to C-terminus: Highly reducing polyketide synthase poxF (2527 aa).

Residues 20–445 enclose the Ketosynthase family 3 (KS3) domain; sequence VMPIAIIGMA…GANAHVIVES (426 aa). Residues Cys193, His328, and His368 each act as for beta-ketoacyl synthase activity in the active site. The segment at 560-882 is malonyl-CoA:ACP transacylase (MAT) domain; the sequence is VFTGQGAQWF…TYASCLSRGQ (323 aa). The tract at residues 951–1086 is N-terminal hotdog fold; sequence HDLLGVPAAG…GLCCTPSPAQ (136 aa). Residues 951–1243 are dehydratase (DH) domain; it reads HDLLGVPAAG…SVRVINNAGT (293 aa). Residues 951–1270 enclose the PKS/mFAS DH domain; the sequence is HDLLGVPAAG…CQSLGSSAVV (320 aa). His983 serves as the catalytic Proton acceptor; for dehydratase activity. The tract at residues 1108–1270 is C-terminal hotdog fold; that stretch reads AWRILNPADT…CQSLGSSAVV (163 aa). The active-site Proton donor; for dehydratase activity is the Asp1174. The interval 1406-1587 is methyltransferase (CMet) domain; it reads EDQAEWSSVS…RLLAKAGFEP (182 aa). Positions 1823-2137 are enoyl reductase (ER) (ER) domain; sequence GLLNSLVFTE…TGKHMGKIVL (315 aa). A ketoreductase (KR) domain region spans residues 2162 to 2339; the sequence is TYLLVGGVGG…AVSIDLGMVS (178 aa). Positions 2445–2522 constitute a Carrier domain; it reads EVTTLIQSAL…GLAGQMAKKS (78 aa). Ser2482 carries the post-translational modification O-(pantetheine 4'-phosphoryl)serine.

The protein operates within secondary metabolite biosynthesis. Its function is as follows. Highly reducing polyketide synthase; part of the gene cluster that mediates the biosynthesis of oxaleimides, cytotoxic compounds containing an unusual disubstituted succinimide moiety. The first step of the pathway is provided by the HR-PKS poxF that serves in a new mode of collaborative biosynthesis with the PKS-NRPS poxE, by providing the olefin containing amino acid substrate via the synthesis of an ACP-bound dec-4-enoate. The cytochrome P450 monooxygenase poxM-catalyzed oxidation at the alpha-position creates the enzyme-bound 2-hydroxydec-4-enoyl-ACP thioester, which may be prone to spontaneous hydrolysis to yield 2-hydroxydec-4-enoic acid due to increased electrophilicity of the carbonyl. 2-hydroxydec-4-enoic acid can then be further oxidized by poxM to yield the alpha-ketoacid 2-oxodec-4-enoicacid, which is reductively aminated by the aminotransferase poxL to yield (S,E)-2-aminodec-4-enoic acid. The Hybrid PKS-NRPS synthetase poxE then performs condensation between the octaketide product of its PKS modules and the amino group of (S,E)-2-aminodec-4-enoic acid which is activated and incorporated by the adenylation domain. The resulting aminoacyl product can be cyclized by the Diels-Alderase PoxQ and reductively released by the reductive (R) domain of poxE to yield an aldehyde intermediate. The released aldehyde is then substrate for a Knoevenagel condensation by the hydrolyase poxO followed by an oxidation at the 5-position of the pyrrolidone ring. The presence of the olefin from the amino acid building block allows for migration of the substituted allyl group to occur. This allylic transposition reaction takes place in a conjugate addition, semipinacol-like fashion to yield a succinimide intermediate. Iterative two-electron oxidations of the C7 methyl of the succinimide intermediate to the carboxylic acid can be catalyzed by one of two remaining cytochrome P450 monooxygenasess poxC or poxD to yield oxaleimide A. Subsequent oxidation yields the maleimide scaffold oxaleimide I. Both oxaleimide A and oxaleimide I can undergo oxidative modifications in the decalin ring to yield the series of products oxaleimides B to H. In Penicillium oxalicum, this protein is Highly reducing polyketide synthase poxF.